A 207-amino-acid chain; its full sequence is Venom allergen 5 (207 aa).

4 disulfide bridges follow: cysteine 4/cysteine 16, cysteine 8/cysteine 105, cysteine 29/cysteine 97, and cysteine 173/cysteine 190. The region spanning 48–192 is the SCP domain; sequence VDEHNRFRQK…MKSHYLVCNY (145 aa).

Belongs to the CRISP family. Venom allergen 5-like subfamily. Monomer. As to expression, expressed by the venom gland.

Its subcellular location is the secreted. The sequence is that of Venom allergen 5 from Polybia scutellaris rioplatensis (Camoati).